A 302-amino-acid chain; its full sequence is Catechol 1,2-dioxygenase (302 aa).

Tyr164, Tyr198, His222, and His224 together coordinate Fe cation.

Belongs to the intradiol ring-cleavage dioxygenase family. Requires Fe(3+) as cofactor.

The catalysed reaction is catechol + O2 = cis,cis-muconate + 2 H(+). Its pathway is aromatic compound metabolism; beta-ketoadipate pathway; 5-oxo-4,5-dihydro-2-furylacetate from catechol: step 1/3. The chain is Catechol 1,2-dioxygenase (pheB) from Pseudomonas sp. (strain EST1001).